The primary structure comprises 382 residues: Apolipoprotein A-IV (382 aa).

Positions M1–A20 are cleaved as a signal peptide. Repeat copies occupy residues D33–L54, T60–V81, P82–R103, P115–G136, P137–K158, P159–A180, P181–T202, P203–A224, P225–K246, K247–V268, P269–Q286, K287–E308, and P309–G330. A 13 X 22 AA approximate tandem repeats region spans residues D33 to G330. Residues E361–G382 are disordered.

This sequence belongs to the apolipoprotein A1/A4/E family. In terms of assembly, homodimer. Secreted in plasma.

Its subcellular location is the secreted. Its function is as follows. May have a role in chylomicrons and VLDL secretion and catabolism. Required for efficient activation of lipoprotein lipase by ApoC-II; potent activator of LCAT. Apoa-IV is a major component of HDL and chylomicrons. The protein is Apolipoprotein A-IV (APOA4) of Sus scrofa (Pig).